The following is a 364-amino-acid chain: MAKNSVEFDRYIERKAFDNTKEGVKGLIDAKITEIPRIFHVPQDTLPDKKRSVSDLEIPTIDFASVNVDTPSREAIVEKVKYAVENWGFFQVINHGVPLNVLEEIKDGVRRFHEEEDPEVKKSYYSLDFTKNKFAYSSNFDLYSSSPSLTWRDSISCYMAPDPPTPEELPETCRDAMIEYSKHVLSLGDLLFELLSEALGLKSEILKSMDCLKSLLMICHYYPPCPQPDLTLGISKHSDNSFLTVLLQDNIGGLQILHQDSWVDVSPLPGALVVNVGDFLQLITNDKFISVEHRVLANTRGPRISVASFFSSSIRENSTVYGPMKELVSEENPPKYRDTTLREYSEGYFKKGLDGTSHLSNFRI.

Residues 213–312 (KSLLMICHYY…RISVASFFSS (100 aa)) form the Fe2OG dioxygenase domain. Residues His237, Asp239, and His293 each coordinate Fe cation. Arg303 contributes to the 2-oxoglutarate binding site.

This sequence belongs to the iron/ascorbate-dependent oxidoreductase family. Fe(2+) is required as a cofactor.

This is 1-aminocyclopropane-1-carboxylate oxidase homolog 11 from Arabidopsis thaliana (Mouse-ear cress).